A 116-amino-acid chain; its full sequence is MANHFRTDRVGMEIKREVNEILQKKVRDPRVQGVTITDVQMLGDLSVAKVYYTILSNLASDNQKAQIGLEKATGTIKRELGRNLKLYKIPDLTFVKDESIEYGNKIDEMLRNLDKN.

It belongs to the RbfA family. Monomer. Binds 30S ribosomal subunits, but not 50S ribosomal subunits or 70S ribosomes.

The protein resides in the cytoplasm. Its function is as follows. One of several proteins that assist in the late maturation steps of the functional core of the 30S ribosomal subunit. Associates with free 30S ribosomal subunits (but not with 30S subunits that are part of 70S ribosomes or polysomes). Required for efficient processing of 16S rRNA. May interact with the 5'-terminal helix region of 16S rRNA. The protein is Ribosome-binding factor A of Streptococcus pneumoniae (strain ATCC 700669 / Spain 23F-1).